The chain runs to 578 residues: Interleukin-10 receptor subunit alpha (578 aa).

The N-terminal stretch at Met-1–Ala-21 is a signal peptide. The Extracellular portion of the chain corresponds to His-22–Asn-235. Residues Asn-50, Asn-74, Asn-110, Asn-154, Asn-177, and Asn-189 are each glycosylated (N-linked (GlcNAc...) asparagine). Residues Cys-56 and Cys-75 are joined by a disulfide bond. Residues Cys-202 and Cys-223 are joined by a disulfide bond. A helical membrane pass occupies residues Val-236 to Leu-256. Residues Gln-257 to Glu-578 lie on the Cytoplasmic side of the membrane. The tract at residues Leu-313–Glu-436 is disordered. The span at Ser-316 to Glu-332 shows a compositional bias: polar residues. The short motif at Asp-318 to Ser-323 is the BTRC recognition motif element. The span at Gly-357–Gly-371 shows a compositional bias: low complexity. Over residues Pro-377–Arg-396 the composition is skewed to polar residues.

The protein belongs to the type II cytokine receptor family. In terms of assembly, interacts with IL10. Interacts with IL10RB. Interacts (via its cytoplasmic domain) with JAK1 (via N-terminus). Interacts with BTRC; this interaction leads to IL10RA ubiquitination and subsequent degradation. Interacts with STAT3. As to quaternary structure, (Microbial infection) Interacts with human cytomegalovirus protein IL10. (Microbial infection) Interacts with Epstein-Barr virus protein IL10. Phosphorylated. Phosphorylation of the cytoplasmic tail induced STAT3 activation. Post-translationally, ubiquitinated by BTRC; ubiquitination leads to endocytosis and subsequent degradation of IL10RA. In terms of tissue distribution, primarily expressed in hematopoetic cells including B-cells, T-cells, NK cells, monocytes and macrophages. Not expressed in non-hematopoetic cells such as fibroblasts or endothelial cells.

It is found in the cell membrane. It localises to the cytoplasm. Its function is as follows. Cell surface receptor for the cytokine IL10 that participates in IL10-mediated anti-inflammatory functions, limiting excessive tissue disruption caused by inflammation. Upon binding to IL10, induces a conformational change in IL10RB, allowing IL10RB to bind IL10 as well. In turn, the heterotetrameric assembly complex, composed of two subunits of IL10RA and IL10RB, activates the kinases JAK1 and TYK2 that are constitutively associated with IL10RA and IL10RB respectively. These kinases then phosphorylate specific tyrosine residues in the intracellular domain in IL10RA leading to the recruitment and subsequent phosphorylation of STAT3. Once phosphorylated, STAT3 homodimerizes, translocates to the nucleus and activates the expression of anti-inflammatory genes. In addition, IL10RA-mediated activation of STAT3 inhibits starvation-induced autophagy. This chain is Interleukin-10 receptor subunit alpha (IL10RA), found in Homo sapiens (Human).